Consider the following 648-residue polypeptide: Zinc finger protein 202 (648 aa).

Lysine 22 is covalently cross-linked (Glycyl lysine isopeptide (Lys-Gly) (interchain with G-Cter in SUMO2)). The SCAN box domain maps to 46-127; sequence HQNFRRFRYQ…VTLVEGLQKQ (82 aa). Positions 146 to 221 are disordered; that stretch reads SEETVHLGVE…PDLPAERSSG (76 aa). Positions 165 to 182 are enriched in polar residues; it reads PVQSSTPEQSPEETTQSP. Positions 237-308 constitute a KRAB domain; the sequence is VTFKDVAVCF…DIQEPQETQE (72 aa). 2 consecutive C2H2-type zinc fingers follow at residues 397–419 and 425–447; these read HDCS…LRTH and YKCM…QKVH. Glycyl lysine isopeptide (Lys-Gly) (interchain with G-Cter in SUMO2) cross-links involve residues lysine 454 and lysine 460. Serine 466 is modified (phosphoserine). The C2H2-type 3 zinc finger occupies 481–503; sequence YRCDDCGKHFRWTSDLVRHQRTH. Glycyl lysine isopeptide (Lys-Gly) (interchain with G-Cter in SUMO2) cross-links involve residues lysine 507 and lysine 521. 5 C2H2-type zinc fingers span residues 509–531, 537–559, 565–587, 593–615, and 621–643; these read FFCT…QRIH, YLCG…RKTH, YLCS…LRGH, CRCN…QRTH, and FTCP…QRTH.

As to quaternary structure, interacts with SDP1. Highly expressed in testis. Also expressed in breast carcinoma cell lines.

The protein resides in the nucleus. Functionally, transcriptional repressor that binds to elements found predominantly in genes that participate in lipid metabolism. Among its targets are structural components of lipoprotein particles (apolipoproteins AIV, CIII, and E), enzymes involved in lipid processing (lipoprotein lipase, lecithin cholesteryl ester transferase), transporters involved in lipid homeostasis (ABCA1, ABCG1), and several genes involved in processes related to energy metabolism and vascular disease. This is Zinc finger protein 202 (ZNF202) from Homo sapiens (Human).